Reading from the N-terminus, the 320-residue chain is tRNA N6-adenosine threonylcarbamoyltransferase (320 aa).

Residues histidine 113 and histidine 117 each contribute to the Fe cation site. Substrate is bound by residues 143 to 147, aspartate 176, glycine 189, aspartate 193, and asparagine 281; that span reads VVSGG. Aspartate 305 contacts Fe cation.

This sequence belongs to the KAE1 / TsaD family. Requires Fe(2+) as cofactor.

It localises to the cytoplasm. It catalyses the reaction L-threonylcarbamoyladenylate + adenosine(37) in tRNA = N(6)-L-threonylcarbamoyladenosine(37) in tRNA + AMP + H(+). Required for the formation of a threonylcarbamoyl group on adenosine at position 37 (t(6)A37) in tRNAs that read codons beginning with adenine. Is involved in the transfer of the threonylcarbamoyl moiety of threonylcarbamoyl-AMP (TC-AMP) to the N6 group of A37, together with TsaE and TsaB. TsaD likely plays a direct catalytic role in this reaction. This is tRNA N6-adenosine threonylcarbamoyltransferase from Mycoplasmoides gallisepticum (strain R(low / passage 15 / clone 2)) (Mycoplasma gallisepticum).